Consider the following 133-residue polypeptide: Large ribosomal subunit protein uL15 (133 aa).

The tract at residues 1–64 (MGLENLKPAK…QPLQRRLPKI (64 aa)) is disordered.

Belongs to the universal ribosomal protein uL15 family. In terms of assembly, part of the 50S ribosomal subunit.

In terms of biological role, binds to the 23S rRNA. This chain is Large ribosomal subunit protein uL15, found in Helicobacter pylori (strain J99 / ATCC 700824) (Campylobacter pylori J99).